We begin with the raw amino-acid sequence, 964 residues long: E3 ubiquitin-protein ligase TRIM37 (964 aa).

M1 is subject to N-acetylmethionine. The segment at 15-55 adopts an RING-type; degenerate zinc-finger fold; it reads CFICMEKLRDARLCPHCSKLCCFSCIRRWLTEQRAQCPHCR. The B box-type zinc finger occupies 90-132; sequence NEKDKCENHHEKLSVFCWTCKKCICHQCALWGGMHGGHTFKPL. Positions 95, 98, 117, and 124 each coordinate Zn(2+). Residues 132-234 are a coiled coil; that stretch reads LAEIYEQHVT…VEHQLRSCSK (103 aa). In terms of domain architecture, MATH spans 276 to 403; it reads YDSATFVLEN…NDTVILRFQV (128 aa). Residues 419-450 adopt a coiled-coil conformation; that stretch reads ITQLEAAQTSYIQQINNLKERLTIELSRTQKS. A Phosphoserine modification is found at S454. Disordered stretches follow at residues 477–513, 530–554, and 640–663; these read CSDMLLEGGPTTASVREAKEDEEDEEKIQNEDYHHEL, QLDGSSSSASSTATSNTEENDIDEE, and RPPASLLQPTASYSRKDKDQRKQQ. A compositionally biased stretch (basic and acidic residues) spans 503-513; that stretch reads KIQNEDYHHEL. Low complexity predominate over residues 534-544; that stretch reads SSSSASSTATS. The stretch at 673–700 forms a coiled coil; that stretch reads KMLKRLKTQMAEVRCMKTDVKNTLSEIK. The span at 752–761 shows a compositional bias: polar residues; it reads NSTNKKSNSP. Disordered stretches follow at residues 752-812 and 891-964; these read NSTN…SPRA and GASA…NSGR. Residues 776-788 show a composition bias toward basic and acidic residues; that stretch reads RAVDPGENSRSKG. Positions 794 to 807 are enriched in low complexity; it reads SEGSPGSSQSGSRH. The segment covering 904-916 has biased composition (acidic residues); it reads SDIECDTENEEQE. Positions 955–964 are enriched in polar residues; it reads SFNTDENSGR.

This sequence belongs to the TRIM/RBCC family. Associates with the PRC2/EED-EZH2 complex. Post-translationally, auto-ubiquitinated. In terms of tissue distribution, ubiquitous. Highly expressed in testis, while it is weakly expressed in other tissues.

Its subcellular location is the chromosome. The protein localises to the cytoplasm. The protein resides in the perinuclear region. It localises to the peroxisome membrane. It carries out the reaction S-ubiquitinyl-[E2 ubiquitin-conjugating enzyme]-L-cysteine + [acceptor protein]-L-lysine = [E2 ubiquitin-conjugating enzyme]-L-cysteine + N(6)-ubiquitinyl-[acceptor protein]-L-lysine.. It functions in the pathway protein modification; protein ubiquitination. E3 ubiquitin-protein ligase required to prevent centriole reduplication. Probably acts by ubiquitinating positive regulators of centriole reduplication. Mediates monoubiquitination of 'Lys-119' of histone H2A (H2AK119Ub), a specific tag for epigenetic transcriptional repression: associates with some Polycomb group (PcG) multiprotein PRC2-like complex and mediates repression of target genes. Also acts as a positive regulator of peroxisome import by mediating monoubiquitination of PEX5 at 'Lys-472': monoubiquitination promotes PEX5 stabilitation by preventing its polyubiquitination and degradation by the proteasome. Has anti-HIV activity. The chain is E3 ubiquitin-protein ligase TRIM37 from Homo sapiens (Human).